The primary structure comprises 194 residues: Ribonuclease HII (194 aa).

An RNase H type-2 domain is found at 3-193; that stretch reads ILTAGVDEAG…VRNLLAQQTL (191 aa). Residues aspartate 9, glutamate 10, and aspartate 101 each contribute to the a divalent metal cation site.

Belongs to the RNase HII family. The cofactor is Mn(2+). It depends on Mg(2+) as a cofactor.

It localises to the cytoplasm. It carries out the reaction Endonucleolytic cleavage to 5'-phosphomonoester.. Functionally, endonuclease that specifically degrades the RNA of RNA-DNA hybrids. In Neisseria meningitidis serogroup C (strain 053442), this protein is Ribonuclease HII.